Reading from the N-terminus, the 251-residue chain is Flap endonuclease Xni (251 aa).

Asp104 provides a ligand contact to Mg(2+). The region spanning Val160 to Leu249 is the 5'-3' exonuclease domain. Positions 171, 172, 180, 182, and 185 each coordinate K(+). The segment at Gly184–Ser189 is interaction with DNA.

Belongs to the Xni family. Requires Mg(2+) as cofactor. K(+) is required as a cofactor.

Functionally, has flap endonuclease activity. During DNA replication, flap endonucleases cleave the 5'-overhanging flap structure that is generated by displacement synthesis when DNA polymerase encounters the 5'-end of a downstream Okazaki fragment. This Salmonella paratyphi A (strain ATCC 9150 / SARB42) protein is Flap endonuclease Xni.